Reading from the N-terminus, the 169-residue chain is Large ribosomal subunit protein uL5 (169 aa).

It belongs to the universal ribosomal protein uL5 family. As to quaternary structure, part of the 50S ribosomal subunit; contacts the 5S rRNA and probably tRNA. Forms a bridge to the 30S subunit in the 70S ribosome.

This is one of the proteins that bind and probably mediate the attachment of the 5S RNA into the large ribosomal subunit, where it forms part of the central protuberance. In the 70S ribosome it contacts protein S13 of the 30S subunit (bridge B1b), connecting the 2 subunits; this bridge is implicated in subunit movement. May contact the P site tRNA; the 5S rRNA and some of its associated proteins might help stabilize positioning of ribosome-bound tRNAs. This Nanoarchaeum equitans (strain Kin4-M) protein is Large ribosomal subunit protein uL5.